We begin with the raw amino-acid sequence, 120 residues long: Small ribosomal subunit protein uS13 (120 aa).

A disordered region spans residues 92-120; that stretch reads RRGLPCRGQRTRTNARTRKGPRKPIAGKK.

The protein belongs to the universal ribosomal protein uS13 family. Part of the 30S ribosomal subunit. Forms a loose heterodimer with protein S19. Forms two bridges to the 50S subunit in the 70S ribosome.

In terms of biological role, located at the top of the head of the 30S subunit, it contacts several helices of the 16S rRNA. In the 70S ribosome it contacts the 23S rRNA (bridge B1a) and protein L5 of the 50S subunit (bridge B1b), connecting the 2 subunits; these bridges are implicated in subunit movement. Contacts the tRNAs in the A and P-sites. This is Small ribosomal subunit protein uS13 from Laribacter hongkongensis (strain HLHK9).